A 159-amino-acid chain; its full sequence is UPF0262 protein RD1_1069 (159 aa).

The protein belongs to the UPF0262 family.

The protein is UPF0262 protein RD1_1069 of Roseobacter denitrificans (strain ATCC 33942 / OCh 114) (Erythrobacter sp. (strain OCh 114)).